Consider the following 432-residue polypeptide: Tyrosine-protein phosphatase non-receptor type 1 (432 aa).

M1 is modified (N-acetylmethionine). Residues 3-277 (MEKEFEQIDK…RFSYLAVIEG (275 aa)) form the Tyrosine-protein phosphatase domain. Y20 carries the post-translational modification Phosphotyrosine. S50 carries the phosphoserine; by PKB/AKT1, CLK1 and CLK2 modification. Phosphotyrosine; by EGFR is present on Y66. Residues D181 and 215-221 (CSAGIGR) each bind substrate. C215 acts as the Phosphocysteine intermediate in catalysis. C215 carries the cysteine persulfide modification. C215 is subject to S-nitrosocysteine; in reversibly inhibited form. A phosphoserine; by CLK1 and CLK2 mark is found at S242 and S243. Q262 contacts substrate. A disordered region spans residues 297-322 (EDLEPPPEHVPPPPRPPKRTLEPHNG). 3 positions are modified to phosphoserine: S335, S362, and S364. The interval 350-402 (SRAPSIAVHSMSSMSQDTEVRKRMVGGGLQSAQASVPTEEELSPTEEEQKAHR) is disordered. T367 bears the Phosphothreonine mark.

Belongs to the protein-tyrosine phosphatase family. Non-receptor class 1 subfamily. As to quaternary structure, interacts with EPHA3 (phosphorylated); dephosphorylates EPHA3 and may regulate its trafficking and function. Interacts with MET. Interacts with NCK1. In terms of processing, ser-50 is the major site of phosphorylation as compared to Ser-242 and Ser-243. Activated by phosphorylation at Ser-50. S-nitrosylation of Cys-215 inactivates the enzyme activity. Post-translationally, sulfhydration at Cys-215 following endoplasmic reticulum stress inactivates the enzyme activity, promoting EIF2AK3/PERK activity. As to expression, found in several tissues including central nervous system, liver and kidney. A high level of expression was found in the hippocampus.

It is found in the endoplasmic reticulum membrane. It catalyses the reaction O-phospho-L-tyrosyl-[protein] + H2O = L-tyrosyl-[protein] + phosphate. Tyrosine-protein phosphatase which acts as a regulator of endoplasmic reticulum unfolded protein response. Mediates dephosphorylation of EIF2AK3/PERK; inactivating the protein kinase activity of EIF2AK3/PERK. May play an important role in CKII- and p60c-src-induced signal transduction cascades. May regulate the EFNA5-EPHA3 signaling pathway which modulates cell reorganization and cell-cell repulsion. May also regulate the hepatocyte growth factor receptor signaling pathway through dephosphorylation of MET. This is Tyrosine-protein phosphatase non-receptor type 1 (Ptpn1) from Rattus norvegicus (Rat).